The chain runs to 314 residues: WD repeat domain-containing protein 83 (314 aa).

WD repeat units lie at residues 23 to 62, 65 to 104, 107 to 146, 151 to 188, 189 to 228, 231 to 272, and 275 to 313; these read CNQGAVRAVRFNVDGNYCMTCGSDKTLKLWNPHKGTLLKT, GHGYEVLDTAGSYDNSQMCSCSSDKTVILWDVAQGQVVRK, GHAGKVNCVQFNEEATVIMSGSIDSSIRCWDCRSRRPEAI, EAKDGISSIKISDHEILAGSVDGNLRRYDLRKGEMCAD, YLGSPITCVSFSQDSQCLLASSLDSTLRLLDKDTGELLGE, GHQN…LVLK, and VGKAAVQSLSFHPSECCLLTASEGGVQLWRGASYEEEGG.

This sequence belongs to the WD repeat MORG1 family.

Its subcellular location is the cytoplasm. Molecular scaffold protein for various multimeric protein complexes. Acts as a module in the assembly of a multicomponent scaffold for the ERK pathway, linking ERK responses to specific agonists. Also involved in response to hypoxia by acting as a negative regulator of HIF1A/HIF-1-alpha. This is WD repeat domain-containing protein 83 (wdr83) from Xenopus tropicalis (Western clawed frog).